The sequence spans 561 residues: Putative periplasmic trehalase (561 aa).

An N-terminal signal peptide occupies residues 1–30; sequence MKSPAPSRPQKMALIPACIFLCFAALSVQA. Substrate-binding positions include R148, 155–156, N192, 201–203, 273–275, and G306; these read WD, RSQ, and RPE. Active-site proton donor/acceptor residues include D308 and E492. E507 serves as a coordination point for substrate. Positions 535–561 are disordered; it reads CDNVPATRPLSESTTQPVKQKEAEPTP.

This sequence belongs to the glycosyl hydrolase 37 family. As to quaternary structure, monomer.

It localises to the periplasm. The enzyme catalyses alpha,alpha-trehalose + H2O = alpha-D-glucose + beta-D-glucose. In terms of biological role, provides the cells with the ability to utilize trehalose at high osmolarity by splitting it into glucose molecules that can subsequently be taken up by the phosphotransferase-mediated uptake system. This is Putative periplasmic trehalase from Escherichia coli O157:H7.